The chain runs to 147 residues: Putative acetyltransferase BSU40680 (147 aa).

The N-acetyltransferase domain occupies 1–144 (MNVKKITSEQ…PHVLMTKQDD (144 aa)). CoA contacts are provided by residues 74-76 (ICI) and 115-117 (GFY).

The protein belongs to the UPF0039 (ElaA) family.

Functionally, could catalyze the transfer of an acetyl group from acetyl coenzyme A (AcCoA) to an acceptor substrate and release both CoA and the acetylated product. The chain is Putative acetyltransferase BSU40680 (yybD) from Bacillus subtilis (strain 168).